Reading from the N-terminus, the 481-residue chain is Protein nucleotidyltransferase YdiU (481 aa).

Residues G85, G87, R88, K108, D120, G121, R172, and R179 each coordinate ATP. D248 serves as the catalytic Proton acceptor. 2 residues coordinate Mg(2+): N249 and D258. D258 contributes to the ATP binding site.

This sequence belongs to the SELO family. It depends on Mg(2+) as a cofactor. Mn(2+) is required as a cofactor.

It catalyses the reaction L-seryl-[protein] + ATP = 3-O-(5'-adenylyl)-L-seryl-[protein] + diphosphate. The enzyme catalyses L-threonyl-[protein] + ATP = 3-O-(5'-adenylyl)-L-threonyl-[protein] + diphosphate. The catalysed reaction is L-tyrosyl-[protein] + ATP = O-(5'-adenylyl)-L-tyrosyl-[protein] + diphosphate. It carries out the reaction L-histidyl-[protein] + UTP = N(tele)-(5'-uridylyl)-L-histidyl-[protein] + diphosphate. It catalyses the reaction L-seryl-[protein] + UTP = O-(5'-uridylyl)-L-seryl-[protein] + diphosphate. The enzyme catalyses L-tyrosyl-[protein] + UTP = O-(5'-uridylyl)-L-tyrosyl-[protein] + diphosphate. Nucleotidyltransferase involved in the post-translational modification of proteins. It can catalyze the addition of adenosine monophosphate (AMP) or uridine monophosphate (UMP) to a protein, resulting in modifications known as AMPylation and UMPylation. The sequence is that of Protein nucleotidyltransferase YdiU from Cereibacter sphaeroides (strain ATCC 17023 / DSM 158 / JCM 6121 / CCUG 31486 / LMG 2827 / NBRC 12203 / NCIMB 8253 / ATH 2.4.1.) (Rhodobacter sphaeroides).